A 511-amino-acid chain; its full sequence is Acidic amino acid decarboxylase GADL1 (511 aa).

K323 carries the post-translational modification N6-(pyridoxal phosphate)lysine.

The protein belongs to the group II decarboxylase family. In terms of assembly, homodimer. Pyridoxal 5'-phosphate is required as a cofactor.

The enzyme catalyses L-aspartate + H(+) = beta-alanine + CO2. The catalysed reaction is 3-sulfino-L-alanine + H(+) = hypotaurine + CO2. In terms of biological role, catalyzes the decarboxylation of L-aspartate, 3-sulfino-L-alanine (cysteine sulfinic acid), and L-cysteate to beta-alanine, hypotaurine and taurine, respectively. The preferred substrate is L-aspartate. Does not exhibit any decarboxylation activity toward glutamate. The sequence is that of Acidic amino acid decarboxylase GADL1 (gadl1) from Xenopus tropicalis (Western clawed frog).